Reading from the N-terminus, the 316-residue chain is HTH-type transcriptional regulator cbl (316 aa).

The HTH lysR-type domain maps to M1 to M59. The segment at residues L19–R38 is a DNA-binding region (H-T-H motif).

The protein belongs to the LysR transcriptional regulatory family.

Functionally, may be an accessory regulatory protein within the cys regulon. The chain is HTH-type transcriptional regulator cbl (cbl) from Klebsiella aerogenes (Enterobacter aerogenes).